The primary structure comprises 102 residues: Large ribosomal subunit protein bL21 (102 aa).

This sequence belongs to the bacterial ribosomal protein bL21 family. Part of the 50S ribosomal subunit. Contacts protein L20.

This protein binds to 23S rRNA in the presence of protein L20. The chain is Large ribosomal subunit protein bL21 from Bacillus velezensis (strain DSM 23117 / BGSC 10A6 / LMG 26770 / FZB42) (Bacillus amyloliquefaciens subsp. plantarum).